The chain runs to 89 residues: Small ribosomal subunit protein uS15 (89 aa).

The protein belongs to the universal ribosomal protein uS15 family. As to quaternary structure, part of the 30S ribosomal subunit. Forms a bridge to the 50S subunit in the 70S ribosome, contacting the 23S rRNA.

One of the primary rRNA binding proteins, it binds directly to 16S rRNA where it helps nucleate assembly of the platform of the 30S subunit by binding and bridging several RNA helices of the 16S rRNA. Functionally, forms an intersubunit bridge (bridge B4) with the 23S rRNA of the 50S subunit in the ribosome. The sequence is that of Small ribosomal subunit protein uS15 from Rhizobium johnstonii (strain DSM 114642 / LMG 32736 / 3841) (Rhizobium leguminosarum bv. viciae).